The sequence spans 704 residues: Elongation factor G (704 aa).

The 281-residue stretch at 10–290 (TKVRNIGIMA…AVVDYLPSPL (281 aa)) folds into the tr-type G domain. GTP-binding positions include 19 to 26 (AHIDAGKT), 83 to 87 (DTPGH), and 137 to 140 (NKMD).

This sequence belongs to the TRAFAC class translation factor GTPase superfamily. Classic translation factor GTPase family. EF-G/EF-2 subfamily.

It localises to the cytoplasm. Functionally, catalyzes the GTP-dependent ribosomal translocation step during translation elongation. During this step, the ribosome changes from the pre-translocational (PRE) to the post-translocational (POST) state as the newly formed A-site-bound peptidyl-tRNA and P-site-bound deacylated tRNA move to the P and E sites, respectively. Catalyzes the coordinated movement of the two tRNA molecules, the mRNA and conformational changes in the ribosome. The polypeptide is Elongation factor G (Beutenbergia cavernae (strain ATCC BAA-8 / DSM 12333 / CCUG 43141 / JCM 11478 / NBRC 16432 / NCIMB 13614 / HKI 0122)).